We begin with the raw amino-acid sequence, 354 residues long: 3-dehydroquinate synthase (354 aa).

Residues 61–66 (DGESTK), 119–120 (TT), Lys-132, Lys-141, and 159–162 (FLET) contribute to the NAD(+) site. Positions 174, 238, and 254 each coordinate Zn(2+).

This sequence belongs to the sugar phosphate cyclases superfamily. Dehydroquinate synthase family. It depends on NAD(+) as a cofactor. Co(2+) serves as cofactor. Requires Zn(2+) as cofactor.

Its subcellular location is the cytoplasm. It carries out the reaction 7-phospho-2-dehydro-3-deoxy-D-arabino-heptonate = 3-dehydroquinate + phosphate. The protein operates within metabolic intermediate biosynthesis; chorismate biosynthesis; chorismate from D-erythrose 4-phosphate and phosphoenolpyruvate: step 2/7. Functionally, catalyzes the conversion of 3-deoxy-D-arabino-heptulosonate 7-phosphate (DAHP) to dehydroquinate (DHQ). This is 3-dehydroquinate synthase from Saccharolobus solfataricus (strain ATCC 35092 / DSM 1617 / JCM 11322 / P2) (Sulfolobus solfataricus).